The following is a 113-amino-acid chain: Protein RALF-like 31 (113 aa).

The first 21 residues, 1–21, serve as a signal peptide directing secretion; that stretch reads MFNSTALVIFAILFLLISADA. A propeptide spans 22–58 (removed in mature form); it reads FPIPSPNGEIDAMLIRNSIIGEDEDLMPTEISRRVLM. Intrachain disulfides connect Cys-76/Cys-86 and Cys-98/Cys-104.

The protein belongs to the plant rapid alkalinization factor (RALF) family. Post-translationally, proteolytically cleaved, probably by S1P, a subtilisin-like serine protease (subtilase).

The protein resides in the secreted. In terms of biological role, cell signaling peptide that may regulate plant stress, growth, and development. Mediates a rapid alkalinization of extracellular space by mediating a transient increase in the cytoplasmic Ca(2+) concentration leading to a calcium-dependent signaling events through a cell surface receptor and a concomitant activation of some intracellular mitogen-activated protein kinases. The polypeptide is Protein RALF-like 31 (RALFL31) (Arabidopsis thaliana (Mouse-ear cress)).